We begin with the raw amino-acid sequence, 250 residues long: 7-cyano-7-deazaguanine synthase (250 aa).

28–38 (LSGGLDSATCV) contributes to the ATP binding site. The Zn(2+) site is built by cysteine 213, cysteine 226, cysteine 229, and cysteine 232.

It belongs to the QueC family. Zn(2+) is required as a cofactor.

The enzyme catalyses 7-carboxy-7-deazaguanine + NH4(+) + ATP = 7-cyano-7-deazaguanine + ADP + phosphate + H2O + H(+). It functions in the pathway purine metabolism; 7-cyano-7-deazaguanine biosynthesis. Its function is as follows. Catalyzes the ATP-dependent conversion of 7-carboxy-7-deazaguanine (CDG) to 7-cyano-7-deazaguanine (preQ(0)). The protein is 7-cyano-7-deazaguanine synthase of Rhodopirellula baltica (strain DSM 10527 / NCIMB 13988 / SH1).